Reading from the N-terminus, the 309-residue chain is MPIRVPDELPAVNFLREENVFVMTTSRASGQEIRPLKVLILNLMPKKIETENQFLRLLSNSPLQVDIQLLRIDSRESRNTPAEHLNNFYCNFEDIQEQNFDGLIVTGAPLGLVEFNDVAYWPQIKQVLEWSKDHVTSTLFVCWAVQAALNILYGIPKQTRTDKLSGVYEHHILHPHALLTRGFDDSFLAPHSRYADFPAALIRDYTDLEILAETEEGDAYLFASKDKRIAFVTGHPEYDAQTLAQEFFRDVEAGLDPDVPYNYFPHNDPQNTPRASWRSHGNLLFTNWLNYYVYQITPYDLRHMNPTLD.

The active-site Acyl-thioester intermediate is Cys-142. Positions 163 and 192 each coordinate substrate. Catalysis depends on His-235, which acts as the Proton acceptor. Glu-237 is an active-site residue. Residue Arg-249 participates in substrate binding.

It belongs to the MetA family. As to quaternary structure, homodimer.

The protein resides in the cytoplasm. It catalyses the reaction L-homoserine + succinyl-CoA = O-succinyl-L-homoserine + CoA. The protein operates within amino-acid biosynthesis; L-methionine biosynthesis via de novo pathway; O-succinyl-L-homoserine from L-homoserine: step 1/1. Transfers a succinyl group from succinyl-CoA to L-homoserine, forming succinyl-L-homoserine. The polypeptide is Homoserine O-succinyltransferase (Escherichia coli (strain SE11)).